A 130-amino-acid chain; its full sequence is Ribonuclease VapC22 (130 aa).

Residues 4 to 119 (VLLDSHVAYW…RLVTKDRRLR (116 aa)) form the PINc domain. Mg(2+) contacts are provided by Asp7 and Asp97.

The protein belongs to the PINc/VapC protein family. Mg(2+) is required as a cofactor.

Its subcellular location is the secreted. Toxic component of a type II toxin-antitoxin (TA) system. An RNase. Upon expression in M.smegmatis inhibits translation and colony formation. Its toxic effect on colony formation is neutralized by coexpression with cognate antitoxin VapB22; the effect on translation has not been tested but is probably neutralized also. This chain is Ribonuclease VapC22, found in Mycobacterium tuberculosis (strain ATCC 25618 / H37Rv).